The chain runs to 181 residues: Large ribosomal subunit protein uL6 (181 aa).

Belongs to the universal ribosomal protein uL6 family. As to quaternary structure, part of the 50S ribosomal subunit.

Its function is as follows. This protein binds to the 23S rRNA, and is important in its secondary structure. It is located near the subunit interface in the base of the L7/L12 stalk, and near the tRNA binding site of the peptidyltransferase center. This chain is Large ribosomal subunit protein uL6, found in Vesicomyosocius okutanii subsp. Calyptogena okutanii (strain HA).